The chain runs to 227 residues: NADH-quinone oxidoreductase subunit C (227 aa).

Belongs to the complex I 30 kDa subunit family. As to quaternary structure, NDH-1 is composed of 14 different subunits. Subunits NuoB, C, D, E, F, and G constitute the peripheral sector of the complex.

It is found in the cell inner membrane. It catalyses the reaction a quinone + NADH + 5 H(+)(in) = a quinol + NAD(+) + 4 H(+)(out). In terms of biological role, NDH-1 shuttles electrons from NADH, via FMN and iron-sulfur (Fe-S) centers, to quinones in the respiratory chain. The immediate electron acceptor for the enzyme in this species is believed to be ubiquinone. Couples the redox reaction to proton translocation (for every two electrons transferred, four hydrogen ions are translocated across the cytoplasmic membrane), and thus conserves the redox energy in a proton gradient. The chain is NADH-quinone oxidoreductase subunit C from Coxiella burnetii (strain Dugway 5J108-111).